The primary structure comprises 384 residues: 5-amino-6-(D-ribitylamino)uracil--L-tyrosine 4-hydroxyphenyl transferase 2 (384 aa).

One can recognise a Radical SAM core domain in the interval 53–286; it reads VSYVVNRNIY…IAISRVILHT (234 aa). Residues Cys-67, Cys-71, and Cys-74 each contribute to the [4Fe-4S] cluster site.

The protein belongs to the radical SAM superfamily. CofH family. As to quaternary structure, consists of two subunits, CofG and CofH. Requires [4Fe-4S] cluster as cofactor.

The catalysed reaction is 5-amino-6-(D-ribitylamino)uracil + L-tyrosine + S-adenosyl-L-methionine = 5-amino-5-(4-hydroxybenzyl)-6-(D-ribitylimino)-5,6-dihydrouracil + 2-iminoacetate + 5'-deoxyadenosine + L-methionine + H(+). Its pathway is cofactor biosynthesis; coenzyme F0 biosynthesis. Functionally, catalyzes the radical-mediated synthesis of 5-amino-5-(4-hydroxybenzyl)-6-(D-ribitylimino)-5,6-dihydrouracil from 5-amino-6-(D-ribitylamino)uracil and L-tyrosine. In Methanosarcina mazei (strain ATCC BAA-159 / DSM 3647 / Goe1 / Go1 / JCM 11833 / OCM 88) (Methanosarcina frisia), this protein is 5-amino-6-(D-ribitylamino)uracil--L-tyrosine 4-hydroxyphenyl transferase 2.